Consider the following 336-residue polypeptide: Ribose-phosphate pyrophosphokinase 1 (336 aa).

4 residues coordinate Mg(2+): D150, H152, D161, and D165. Residues 236-251 (GKVAVMVDDMIDTAGT) are binding of phosphoribosylpyrophosphate.

This sequence belongs to the ribose-phosphate pyrophosphokinase family.

The enzyme catalyses D-ribose 5-phosphate + ATP = 5-phospho-alpha-D-ribose 1-diphosphate + AMP + H(+). In Spinacia oleracea (Spinach), this protein is Ribose-phosphate pyrophosphokinase 1 (PRS1).